The chain runs to 139 residues: Large-conductance mechanosensitive channel (139 aa).

The next 2 helical transmembrane spans lie at V14–L34 and G81–V101.

Belongs to the MscL family. In terms of assembly, homopentamer.

It is found in the cell membrane. Channel that opens in response to stretch forces in the membrane lipid bilayer. May participate in the regulation of osmotic pressure changes within the cell. The polypeptide is Large-conductance mechanosensitive channel (Chloroflexus aurantiacus (strain ATCC 29366 / DSM 635 / J-10-fl)).